A 466-amino-acid polypeptide reads, in one-letter code: MTVASVEQMFSGKIQVGSEVTVRGWVRTRRDSKAGLSFVSVSDGSCFAAIQVVTPAHLPNYETEVRKLTTGCAVIVIGTLAPSLGQGQQFEIQAQSIEVVGWVEDPETYPIQPKQHSLEFLREVAHLRPRTNLFGAVARIRHCLSQAVHRFFHENGYYWITTPIITTSDAEGAGQMFRVSTLDLVNLPRTETGGIDFSHDFFGKETFLTVSGQLNVEAYALALSKVYTFGPTFRAENSHTPRHLAEFWMIEPEIAFADLAEDARVAEQFLKFLFKTVLEERDDDLAFITERVEKTTISKLEGFINSPFERIEYTDAIKLLERSGKKFDFPVEWGLDLQTEHERWLTEKHIGRPVVVTNYPEHIKAFYMRLNDDGKTVAAMDVLAPGIGEIIGGSQREERLEMLDIRMAQFGLDPAHYQWYRDFRRYGSVPHAGFGLGFERLVVYVCGLSNIRDAIPYPRAPGSAEF.

It belongs to the class-II aminoacyl-tRNA synthetase family. In terms of assembly, homodimer.

The protein localises to the cytoplasm. The enzyme catalyses tRNA(Asn) + L-asparagine + ATP = L-asparaginyl-tRNA(Asn) + AMP + diphosphate + H(+). This Xylella fastidiosa (strain Temecula1 / ATCC 700964) protein is Asparagine--tRNA ligase.